A 255-amino-acid chain; its full sequence is Small ribosomal subunit protein uS2 (255 aa).

It belongs to the universal ribosomal protein uS2 family.

The sequence is that of Small ribosomal subunit protein uS2 from Streptococcus thermophilus (strain ATCC BAA-491 / LMD-9).